The following is a 213-amino-acid chain: Thymidylate kinase (213 aa).

G10–T17 is a binding site for ATP.

Belongs to the thymidylate kinase family.

The enzyme catalyses dTMP + ATP = dTDP + ADP. Functionally, phosphorylation of dTMP to form dTDP in both de novo and salvage pathways of dTTP synthesis. In Salmonella arizonae (strain ATCC BAA-731 / CDC346-86 / RSK2980), this protein is Thymidylate kinase.